Consider the following 277-residue polypeptide: 2-dehydro-3-deoxyphosphooctonate aldolase (277 aa).

Belongs to the KdsA family.

Its subcellular location is the cytoplasm. It catalyses the reaction D-arabinose 5-phosphate + phosphoenolpyruvate + H2O = 3-deoxy-alpha-D-manno-2-octulosonate-8-phosphate + phosphate. Its pathway is carbohydrate biosynthesis; 3-deoxy-D-manno-octulosonate biosynthesis; 3-deoxy-D-manno-octulosonate from D-ribulose 5-phosphate: step 2/3. It participates in bacterial outer membrane biogenesis; lipopolysaccharide biosynthesis. The sequence is that of 2-dehydro-3-deoxyphosphooctonate aldolase from Hydrogenovibrio crunogenus (strain DSM 25203 / XCL-2) (Thiomicrospira crunogena).